Here is a 179-residue protein sequence, read N- to C-terminus: Large ribosomal subunit protein uL6 (179 aa).

This sequence belongs to the universal ribosomal protein uL6 family. In terms of assembly, part of the 50S ribosomal subunit.

This protein binds to the 23S rRNA, and is important in its secondary structure. It is located near the subunit interface in the base of the L7/L12 stalk, and near the tRNA binding site of the peptidyltransferase center. In Leptospira borgpetersenii serovar Hardjo-bovis (strain JB197), this protein is Large ribosomal subunit protein uL6.